A 196-amino-acid chain; its full sequence is Potassium-transporting ATPase KdpC subunit (196 aa).

A helical transmembrane segment spans residues 17-37 (LLLLVATAGLGLVYPLAVFAV). Residues 73–93 (QPRPSAAGDGYDPTASGASNL) are disordered.

The protein belongs to the KdpC family. In terms of assembly, the system is composed of three essential subunits: KdpA, KdpB and KdpC.

Its subcellular location is the cell membrane. In terms of biological role, part of the high-affinity ATP-driven potassium transport (or Kdp) system, which catalyzes the hydrolysis of ATP coupled with the electrogenic transport of potassium into the cytoplasm. This subunit acts as a catalytic chaperone that increases the ATP-binding affinity of the ATP-hydrolyzing subunit KdpB by the formation of a transient KdpB/KdpC/ATP ternary complex. In Kineococcus radiotolerans (strain ATCC BAA-149 / DSM 14245 / SRS30216), this protein is Potassium-transporting ATPase KdpC subunit.